A 331-amino-acid polypeptide reads, in one-letter code: Sulfate/thiosulfate import ATP-binding protein CysA (331 aa).

One can recognise an ABC transporter domain in the interval isoleucine 2–leucine 232. ATP is bound at residue glycine 34–serine 41.

It belongs to the ABC transporter superfamily. Sulfate/tungstate importer (TC 3.A.1.6) family. The complex is composed of two ATP-binding proteins (CysA), two transmembrane proteins (CysT and CysW) and a solute-binding protein (CysP).

It localises to the cell membrane. It carries out the reaction sulfate(out) + ATP + H2O = sulfate(in) + ADP + phosphate + H(+). The catalysed reaction is thiosulfate(out) + ATP + H2O = thiosulfate(in) + ADP + phosphate + H(+). Its function is as follows. Part of the ABC transporter complex CysAWTP involved in sulfate/thiosulfate import. Responsible for energy coupling to the transport system. This Nocardia farcinica (strain IFM 10152) protein is Sulfate/thiosulfate import ATP-binding protein CysA.